The primary structure comprises 1107 residues: Membrane-associated guanylate kinase, WW and PDZ domain-containing protein 3 (1107 aa).

The region spanning 17–102 (ECGLSGVGGD…PIRLKTVKPG (86 aa)) is the PDZ 1 domain. The Guanylate kinase-like domain maps to 110–284 (RHYLSLQFQK…SMDFRNYLTR (175 aa)). 117–124 (FQKGSIDH) contacts ATP. Residues 210–277 (FDTETQRKRT…SYNQTNSSMD (68 aa)) are disordered. Over residues 220–231 (TSVSKMQRTDSS) the composition is skewed to polar residues. Positions 232–241 (LPEEEDEEER) are enriched in acidic residues. Residues 251 to 261 (TDHRDRQEPSE) are compositionally biased toward basic and acidic residues. Positions 267 to 277 (PSYNQTNSSMD) are enriched in polar residues. WW domains follow at residues 289–322 (EPLPKNWEMAYTEAGMIYFIDHNTKTTTWLDPRL) and 335–368 (GELPYGWEKIEDPQYGTYYVDHINQKTQFDNPVL). The disordered stretch occupies residues 374 to 398 (KQLNPAPSEGTVHQEPENSQFTRDP). 4 PDZ domains span residues 407-489 (HTSL…TLCR), 577-653 (TIPL…LILR), 727-809 (DVFL…TVRR), and 853-940 (DVIL…IAEE). The disordered stretch occupies residues 941–975 (EHRGPPSGSNSARQSPAPQHRPMGQTQPTYGTLDR). Polar residues predominate over residues 947–957 (SGSNSARQSPA). The 83-residue stretch at 1003–1085 (PVELERGPRG…KVLLLLRPGT (83 aa)) folds into the PDZ 6 domain.

The protein belongs to the MAGUK family.

Its subcellular location is the cell membrane. It localises to the cell junction. It is found in the tight junction. In terms of biological role, acts as a scaffolding protein at cell-cell junctions, thereby regulating various cellular and signaling processes. This Xenopus tropicalis (Western clawed frog) protein is Membrane-associated guanylate kinase, WW and PDZ domain-containing protein 3 (magi3).